The chain runs to 224 residues: Small ribosomal subunit protein uS3 (224 aa).

One can recognise a KH type-2 domain in the interval isoleucine 39–lysine 107.

Belongs to the universal ribosomal protein uS3 family. As to quaternary structure, part of the 30S ribosomal subunit. Forms a tight complex with proteins S10 and S14.

In terms of biological role, binds the lower part of the 30S subunit head. Binds mRNA in the 70S ribosome, positioning it for translation. This Chlamydia trachomatis serovar A (strain ATCC VR-571B / DSM 19440 / HAR-13) protein is Small ribosomal subunit protein uS3.